The chain runs to 132 residues: Protein NrdI (132 aa).

This sequence belongs to the NrdI family.

In terms of biological role, probably involved in ribonucleotide reductase function. The polypeptide is Protein NrdI (Bartonella tribocorum (strain CIP 105476 / IBS 506)).